We begin with the raw amino-acid sequence, 353 residues long: Outer membrane protein A (353 aa).

A signal peptide spans 1 to 21 (MKKTAIALAVALVGFATVAQA). 8 consecutive transmembrane segments (beta stranded) span residues 27–37 (TWYTGGKLGWS), 56–67 (QLGAGAFFGYQA), 71–79 (LGFEMGYDW), 97–108 (QGVQLAAKLSYP), 113–121 (LDVYTRLGG), 148–157 (PLVALGAEYA), 162–169 (WATRMEYQ), and 188–196 (LLSVGVSYR). 4 tandem repeats follow at residues 208–209 (AP), 210–211 (TP), 212–213 (AP), and 214–215 (AP). Residues 208–215 (APTPAPAP) form a 4 X 2 AA approximate tandem repeats of A-P region. In terms of domain architecture, OmpA-like spans 217 to 345 (VDTKRFTLKS…RVEIEVKGYK (129 aa)). Cysteine 318 and cysteine 330 are disulfide-bonded.

The protein belongs to the outer membrane OOP (TC 1.B.6) superfamily. OmpA family. As to quaternary structure, monomer and homodimer.

Its subcellular location is the cell outer membrane. With TolR probably plays a role in maintaining the position of the peptidoglycan cell wall in the periplasm. Acts as a porin with low permeability that allows slow penetration of small solutes; an internal gate slows down solute passage. This is Outer membrane protein A from Yersinia pseudotuberculosis serotype I (strain IP32953).